The primary structure comprises 341 residues: tRNA N6-adenosine threonylcarbamoyltransferase (341 aa).

Positions 111 and 115 each coordinate Fe cation. Substrate contacts are provided by residues L134 to G138, D167, G180, and N276. D304 serves as a coordination point for Fe cation.

It belongs to the KAE1 / TsaD family. The cofactor is Fe(2+).

It is found in the cytoplasm. The catalysed reaction is L-threonylcarbamoyladenylate + adenosine(37) in tRNA = N(6)-L-threonylcarbamoyladenosine(37) in tRNA + AMP + H(+). In terms of biological role, required for the formation of a threonylcarbamoyl group on adenosine at position 37 (t(6)A37) in tRNAs that read codons beginning with adenine. Is involved in the transfer of the threonylcarbamoyl moiety of threonylcarbamoyl-AMP (TC-AMP) to the N6 group of A37, together with TsaE and TsaB. TsaD likely plays a direct catalytic role in this reaction. This Pseudomonas aeruginosa (strain LESB58) protein is tRNA N6-adenosine threonylcarbamoyltransferase.